Consider the following 122-residue polypeptide: Large ribosomal subunit protein uL14 (122 aa).

This sequence belongs to the universal ribosomal protein uL14 family. In terms of assembly, part of the 50S ribosomal subunit. Forms a cluster with proteins L3 and L19. In the 70S ribosome, L14 and L19 interact and together make contacts with the 16S rRNA in bridges B5 and B8.

Functionally, binds to 23S rRNA. Forms part of two intersubunit bridges in the 70S ribosome. The protein is Large ribosomal subunit protein uL14 of Campylobacter jejuni subsp. jejuni serotype O:6 (strain 81116 / NCTC 11828).